We begin with the raw amino-acid sequence, 366 residues long: Histidinol-phosphate aminotransferase (366 aa).

N6-(pyridoxal phosphate)lysine is present on lysine 228.

It belongs to the class-II pyridoxal-phosphate-dependent aminotransferase family. Histidinol-phosphate aminotransferase subfamily. In terms of assembly, homodimer. Requires pyridoxal 5'-phosphate as cofactor.

The catalysed reaction is L-histidinol phosphate + 2-oxoglutarate = 3-(imidazol-4-yl)-2-oxopropyl phosphate + L-glutamate. The protein operates within amino-acid biosynthesis; L-histidine biosynthesis; L-histidine from 5-phospho-alpha-D-ribose 1-diphosphate: step 7/9. The sequence is that of Histidinol-phosphate aminotransferase from Corynebacterium diphtheriae (strain ATCC 700971 / NCTC 13129 / Biotype gravis).